A 233-amino-acid polypeptide reads, in one-letter code: Orotidine 5'-phosphate decarboxylase (233 aa).

Residues Asp-11, Lys-34, 61–70 (DLKLHDIPNT), Thr-117, Arg-179, Gln-188, Gly-208, and Arg-209 each bind substrate. Lys-63 serves as the catalytic Proton donor.

Belongs to the OMP decarboxylase family. Type 1 subfamily. Homodimer.

It catalyses the reaction orotidine 5'-phosphate + H(+) = UMP + CO2. Its pathway is pyrimidine metabolism; UMP biosynthesis via de novo pathway; UMP from orotate: step 2/2. Functionally, catalyzes the decarboxylation of orotidine 5'-monophosphate (OMP) to uridine 5'-monophosphate (UMP). The polypeptide is Orotidine 5'-phosphate decarboxylase (Streptococcus pneumoniae serotype 4 (strain ATCC BAA-334 / TIGR4)).